The following is a 685-amino-acid chain: Probable cysteine desulfurase (685 aa).

The cargo-loading domain stretch occupies residues 1-282 (MTRSPCSTTS…RDEHEVFDVA (282 aa)). Disordered regions lie at residues 48 to 135 (SIRP…TSAG) and 162 to 185 (PTPA…VPDT). The segment covering 71–85 (ATAATSAGRTAAGTA) has biased composition (low complexity). The segment covering 102 to 121 (LPPPASPAPEAPPQAAPPAP) has biased composition (pro residues). A compositionally biased stretch (low complexity) spans 122–135 (RGSAPDATAATSAG). A compositionally biased stretch (pro residues) spans 164–178 (PAGPEAPPQSAPPAP). The residue at position 502 (K502) is an N6-(pyridoxal phosphate)lysine. C640 functions as the Cysteine persulfide intermediate in the catalytic mechanism.

This sequence belongs to the class-V pyridoxal-phosphate-dependent aminotransferase family. Csd subfamily. In terms of assembly, isolated from bacteria in a complex with encapsulin 2A (AC I3NID5), strongly suggesting it is found in a type 2A encapsulin nanocompartment. There are 1-2 copies of this protein in each encapsulin shell. The cofactor is pyridoxal 5'-phosphate.

It localises to the encapsulin nanocompartment. The protein localises to the cell membrane. The catalysed reaction is (sulfur carrier)-H + L-cysteine = (sulfur carrier)-SH + L-alanine. Its function is as follows. Cargo protein of a type 2A encapsulin nanocompartment involved in sulfur metabolism. Cysteine desulfurases mobilize the sulfur from L-cysteine to yield L-alanine, an essential step in sulfur metabolism for biosynthesis of a variety of sulfur-containing biomolecules. The chain is Probable cysteine desulfurase from Mycolicibacterium paratuberculosis (strain ATCC BAA-968 / K-10) (Mycobacterium paratuberculosis).